The sequence spans 420 residues: Serine hydroxymethyltransferase (420 aa).

(6S)-5,6,7,8-tetrahydrofolate is bound by residues leucine 121 and 125 to 127 (GHL). The residue at position 230 (lysine 230) is an N6-(pyridoxal phosphate)lysine. (6S)-5,6,7,8-tetrahydrofolate-binding positions include glutamate 246 and 354 to 356 (SPF).

The protein belongs to the SHMT family. In terms of assembly, homodimer. The cofactor is pyridoxal 5'-phosphate.

It localises to the cytoplasm. The catalysed reaction is (6R)-5,10-methylene-5,6,7,8-tetrahydrofolate + glycine + H2O = (6S)-5,6,7,8-tetrahydrofolate + L-serine. It functions in the pathway one-carbon metabolism; tetrahydrofolate interconversion. The protein operates within amino-acid biosynthesis; glycine biosynthesis; glycine from L-serine: step 1/1. In terms of biological role, catalyzes the reversible interconversion of serine and glycine with tetrahydrofolate (THF) serving as the one-carbon carrier. This reaction serves as the major source of one-carbon groups required for the biosynthesis of purines, thymidylate, methionine, and other important biomolecules. Also exhibits THF-independent aldolase activity toward beta-hydroxyamino acids, producing glycine and aldehydes, via a retro-aldol mechanism. The protein is Serine hydroxymethyltransferase of Rickettsia massiliae (strain Mtu5).